A 415-amino-acid polypeptide reads, in one-letter code: MNIDQHHQLQQQHQQQMLQQQAQAQAQAQAQAQQQQQAAAAAAAANAAATTSSSPRQVSFNVSDHYQILEIVGEGAYGIVCSAIHKPSQQKVAIKKIEPFERSMLCLRTLRELKLLKHFNHENIISILAIQRPINYESFNEIYLIQELMETDLHRVIRTQNLSDDHIQYFIYQTLRALKAMHSANVLHRDLKPSNLLLNSNCDLKICDFGLARSIASQEDNYGFMTEYVATRWYRAPEIMLTFQEYTTAIDVWSVGCILAEMLSGRPLFPGRDYHNQLWLIMEVLGTPNMEDYYNIKSKRAREYIRSLPFCKKIPFSELFANTNNNTSTSNTGGRTNINPLALDLLEKLLIFNPAKRITVEDALKHPYLQLYHDPNDEPISDKIPEDFFDFDKMKDQLTIEDLKKLLYEEIMKPL.

In terms of domain architecture, Protein kinase spans 66 to 369 (YQILEIVGEG…VEDALKHPYL (304 aa)). Residues 72 to 80 (VGEGAYGIV) and K95 contribute to the ATP site. D190 acts as the Proton acceptor in catalysis. At T226 the chain carries Phosphothreonine. The TXY motif lies at 226–228 (TEY). Residue Y228 is modified to Phosphotyrosine.

Belongs to the protein kinase superfamily. CMGC Ser/Thr protein kinase family. MAP kinase subfamily. Mg(2+) serves as cofactor. In terms of processing, dually phosphorylated on Thr-226 and Tyr-228, which activates the enzyme.

The catalysed reaction is L-seryl-[protein] + ATP = O-phospho-L-seryl-[protein] + ADP + H(+). The enzyme catalyses L-threonyl-[protein] + ATP = O-phospho-L-threonyl-[protein] + ADP + H(+). With respect to regulation, activated by tyrosine and threonine phosphorylation. This Candida albicans (strain WO-1) (Yeast) protein is Extracellular signal-regulated kinase 1 (CEK1).